A 215-amino-acid polypeptide reads, in one-letter code: Pentapeptide repeat protein QnrB4 (215 aa).

2 consecutive Pentapeptide repeat domains span residues 25–104 (TFFN…SFMN) and 117–191 (ITNT…RGVD).

It belongs to the pentapeptide repeat protein family.

In terms of biological role, probably plays a role in resistance to quinolone antibiotics. Only inhibits ATP-dependent DNA supercoiling by E.coli gyrase at high concentration (30 uM). Protects E.coli gyrase supercoiling activity from inhibition by fluoroquinolones (ciprofloxacin) at 0.1 uM, does not protect M.tuberculosis gyrase activity. The sequence is that of Pentapeptide repeat protein QnrB4 from Escherichia coli.